Reading from the N-terminus, the 487-residue chain is H/ACA ribonucleoprotein complex subunit cbf5 (487 aa).

Aspartate 101 functions as the Nucleophile in the catalytic mechanism. Residues tyrosine 273–methionine 348 enclose the PUA domain. A compositionally biased stretch (low complexity) spans glutamate 400–serine 410. A disordered region spans residues glutamate 400–aspartate 487. Residues methionine 435–glutamate 459 show a composition bias toward basic and acidic residues. Residues arginine 460 to lysine 477 are compositionally biased toward basic residues.

This sequence belongs to the pseudouridine synthase TruB family. In terms of assembly, component of the small nucleolar ribonucleoprotein particles containing H/ACA-type snoRNAs (H/ACA snoRNPs).

Its subcellular location is the nucleus. It localises to the nucleolus. It carries out the reaction uridine in 5S rRNA = pseudouridine in 5S rRNA. It catalyses the reaction uridine in snRNA = pseudouridine in snRNA. The enzyme catalyses a uridine in mRNA = a pseudouridine in mRNA. Functionally, catalytic subunit of H/ACA small nucleolar ribonucleoprotein (H/ACA snoRNP) complex, which catalyzes pseudouridylation of rRNA. This involves the isomerization of uridine such that the ribose is subsequently attached to C5, instead of the normal N1. Pseudouridine ('psi') residues may serve to stabilize the conformation of rRNAs and play a central role in ribosomal RNA processing. The H/ACA snoRNP complex also mediates pseudouridylation of other types of RNAs. Catalyzes pseudouridylation at position 93 in U2 snRNA. Also catalyzes pseudouridylation of mRNAs; H/ACA-type snoRNAs probably guide pseudouridylation of mRNAs. This is H/ACA ribonucleoprotein complex subunit cbf5 (cbf5) from Aspergillus fumigatus (strain ATCC MYA-4609 / CBS 101355 / FGSC A1100 / Af293) (Neosartorya fumigata).